The chain runs to 950 residues: Translation initiation factor IF-2 (950 aa).

Basic and acidic residues-rich tracts occupy residues 128 to 156, 165 to 186, 200 to 234, and 291 to 312; these read KPKV…KVEA, AEVK…EKKK, KRAE…DNRR, and NRRD…DGNR. The tract at residues 128–352 is disordered; sequence KPKVAEPVKK…YQNNQSSNVP (225 aa). Polar residues-rich tracts occupy residues 322–336 and 343–352; these read NRNQ…NWNQ and YQNNQSSNVP. A tr-type G domain is found at 448 to 619; the sequence is ERPAVVTIMG…LLVAEVQELK (172 aa). The interval 457–464 is G1; it reads GHVDHGKT. 457-464 is a binding site for GTP; the sequence is GHVDHGKT. Residues 482–486 are G2; it reads GITQH. The interval 503-506 is G3; sequence DTPG. Residues 503-507 and 557-560 each bind GTP; these read DTPGH and NKLD. The segment at 557 to 560 is G4; that stretch reads NKLD. Residues 595–597 form a G5 region; that stretch reads SAK.

It belongs to the TRAFAC class translation factor GTPase superfamily. Classic translation factor GTPase family. IF-2 subfamily.

Its subcellular location is the cytoplasm. In terms of biological role, one of the essential components for the initiation of protein synthesis. Protects formylmethionyl-tRNA from spontaneous hydrolysis and promotes its binding to the 30S ribosomal subunits. Also involved in the hydrolysis of GTP during the formation of the 70S ribosomal complex. This chain is Translation initiation factor IF-2 (infB), found in Lactococcus lactis subsp. cremoris (Streptococcus cremoris).